Here is a 264-residue protein sequence, read N- to C-terminus: Proteasome assembly chaperone 2 (264 aa).

T137 bears the Phosphothreonine mark.

This sequence belongs to the PSMG2 family. Forms a heterodimer with PSMG1. The PSMG1-PSMG2 heterodimer interacts directly with the PSMA5 and PSMA7 proteasome alpha subunits. In terms of processing, degraded by the proteasome upon completion of 20S proteasome maturation.

The protein localises to the nucleus. Its function is as follows. Chaperone protein which promotes assembly of the 20S proteasome as part of a heterodimer with PSMG1. The PSMG1-PSMG2 heterodimer binds to the PSMA5 and PSMA7 proteasome subunits, promotes assembly of the proteasome alpha subunits into the heteroheptameric alpha ring and prevents alpha ring dimerization. This chain is Proteasome assembly chaperone 2, found in Mus musculus (Mouse).